The sequence spans 447 residues: Argininosuccinate synthase (447 aa).

Residues 12–20 and Ala39 contribute to the ATP site; that span reads AYSGGLDTS. Positions 92 and 97 each coordinate L-citrulline. ATP is bound at residue Gly122. Thr124, Asn128, and Asp129 together coordinate L-aspartate. Asn128 contacts L-citrulline. L-citrulline is bound by residues Arg132, Ser182, Ser191, Glu267, and Tyr279.

This sequence belongs to the argininosuccinate synthase family. Type 1 subfamily. In terms of assembly, homotetramer.

It localises to the cytoplasm. The enzyme catalyses L-citrulline + L-aspartate + ATP = 2-(N(omega)-L-arginino)succinate + AMP + diphosphate + H(+). It participates in amino-acid biosynthesis; L-arginine biosynthesis; L-arginine from L-ornithine and carbamoyl phosphate: step 2/3. The sequence is that of Argininosuccinate synthase from Sulfurovum sp. (strain NBC37-1).